A 285-amino-acid chain; its full sequence is Biotin synthase (285 aa).

The Radical SAM core domain occupies 2-223 (STRKQIFLCA…RRAHTLLGED (222 aa)). Cys-20, Cys-24, and Cys-27 together coordinate [4Fe-4S] cluster. [2Fe-2S] cluster is bound by residues Cys-64, Cys-99, and Cys-157.

The protein belongs to the radical SAM superfamily. Biotin synthase family. Homodimer. The cofactor is [4Fe-4S] cluster. [2Fe-2S] cluster is required as a cofactor.

The enzyme catalyses (4R,5S)-dethiobiotin + (sulfur carrier)-SH + 2 reduced [2Fe-2S]-[ferredoxin] + 2 S-adenosyl-L-methionine = (sulfur carrier)-H + biotin + 2 5'-deoxyadenosine + 2 L-methionine + 2 oxidized [2Fe-2S]-[ferredoxin]. It participates in cofactor biosynthesis; biotin biosynthesis; biotin from 7,8-diaminononanoate: step 2/2. Catalyzes the conversion of dethiobiotin (DTB) to biotin by the insertion of a sulfur atom into dethiobiotin via a radical-based mechanism. The protein is Biotin synthase of Sulfurovum sp. (strain NBC37-1).